We begin with the raw amino-acid sequence, 832 residues long: Disintegrin and metalloproteinase domain-containing protein 23 (832 aa).

Over residues 1–10 (MKPPGSSSRQ) the composition is skewed to polar residues. The segment at 1–37 (MKPPGSSSRQPPLAGCSLAGASCGPQRGPAGSVPASA) is disordered. Positions 1–59 (MKPPGSSSRQPPLAGCSLAGASCGPQRGPAGSVPASAPARTPPCRLLLVLLLLPPLAAS) are cleaved as a signal peptide. Over residues 28–37 (GPAGSVPASA) the composition is skewed to low complexity. A propeptide spanning residues 60 to 286 (SRPRAWGAAA…ELQWLKRRKR (227 aa)) is cleaved from the precursor. N-linked (GlcNAc...) asparagine glycans are attached at residues Asn76, Asn96, Asn100, and Asn263. Topologically, residues 287–792 (AVNPSRGIFE…EGPKGPSATN (506 aa)) are extracellular. Residues 299 to 496 (KYLELMIVND…GGGACLFNRP (198 aa)) form the Peptidase M12B domain. Cystine bridges form between Cys408-Cys491, Cys450-Cys475, and Cys452-Cys459. The 87-residue stretch at 502–588 (PTECGNGYVE…QCPPNLHKQD (87 aa)) folds into the Disintegrin domain. N-linked (GlcNAc...) asparagine glycans are attached at residues Asn547 and Asn548. Cys560 and Cys580 are oxidised to a cystine. The may bind the integrin receptor stretch occupies residues 563–568 (AVNECD). Residues Asn664 and Asn732 are each glycosylated (N-linked (GlcNAc...) asparagine). Residues 732 to 769 (NMSSCPLDSKGKVCSGHGVCSNEATCICDFTWAGTDCS) form the EGF-like domain. 3 disulfide bridges follow: Cys736–Cys751, Cys745–Cys757, and Cys759–Cys768. Residues 793–813 (LIIGSIAGAILVAAIVLGGTG) form a helical membrane-spanning segment. Over 814–832 (WGFKNVKKRRFDPTQQGPI) the chain is Cytoplasmic.

As to quaternary structure, can bind to LGI1 and LGI4. Ligand for integrin alpha-V/beta-3. Highly expressed in the brain and weakly expressed in the heart. In the brain, expressed prominently in the amygdala, caudate nucleus, hypothalamus, thalamus, cerebral cortex and occipital pole.

It localises to the cell membrane. Its subcellular location is the secreted. In terms of biological role, may play a role in cell-cell and cell-matrix interactions. This is a non-catalytic metalloprotease-like protein. The polypeptide is Disintegrin and metalloproteinase domain-containing protein 23 (ADAM23) (Homo sapiens (Human)).